A 208-amino-acid chain; its full sequence is Small ribosomal subunit protein uS4 (208 aa).

The region spanning 98–163 (QRLDNVVYRM…NPQITRAIEL (66 aa)) is the S4 RNA-binding domain.

The protein belongs to the universal ribosomal protein uS4 family. Part of the 30S ribosomal subunit. Contacts protein S5. The interaction surface between S4 and S5 is involved in control of translational fidelity.

Its function is as follows. One of the primary rRNA binding proteins, it binds directly to 16S rRNA where it nucleates assembly of the body of the 30S subunit. Functionally, with S5 and S12 plays an important role in translational accuracy. The polypeptide is Small ribosomal subunit protein uS4 (Campylobacter jejuni (strain RM1221)).